The primary structure comprises 1144 residues: Alpha-mannosidase 2 (1144 aa).

The Cytoplasmic portion of the chain corresponds to 1-5 (MKLSR). Residues 6 to 26 (QFTVFGSAIFCVVIFSLYLML) form a helical; Signal-anchor for type II membrane protein membrane-spanning segment. Topologically, residues 27-1144 (DRGHLDYPRN…EISTFRIQLR (1118 aa)) are lumenal. Asn-78 is a glycosylation site (N-linked (GlcNAc...) asparagine). Ser-80 and Ser-82 each carry phosphoserine. Residue Asn-93 is glycosylated (N-linked (GlcNAc...) asparagine). Zn(2+) is bound by residues His-175, Asp-177, Asp-289, and His-569. Asp-289 functions as the Nucleophile in the catalytic mechanism. An N-linked (GlcNAc...) asparagine glycan is attached at Asn-1125.

It belongs to the glycosyl hydrolase 38 family. As to quaternary structure, homodimer; disulfide-linked. Zn(2+) serves as cofactor. Post-translationally, glycosylated.

The protein resides in the golgi apparatus membrane. The catalysed reaction is N(4)-{beta-D-GlcNAc-(1-&gt;2)-alpha-D-Man-(1-&gt;3)-[alpha-D-Man-(1-&gt;3)-[alpha-D-Man-(1-&gt;6)]-alpha-D-Man-(1-&gt;6)]-beta-D-Man-(1-&gt;4)-beta-D-GlcNAc-(1-&gt;4)-beta-D-GlcNAc}-L-asparaginyl-[protein] + 2 H2O = 2 alpha-D-mannopyranose + an N(4)-{beta-D-GlcNAc-(1-&gt;2)-alpha-D-Man-(1-&gt;3)-[alpha-D-Man-(1-&gt;6)]-beta-D-Man-(1-&gt;4)-beta-D-GlcNAc-(1-&gt;4)-beta-D-GlcNAc}-L-asparaginyl-[protein]. Its pathway is protein modification; protein glycosylation. Its function is as follows. Catalyzes the first committed step in the biosynthesis of complex N-glycans. It controls conversion of high mannose to complex N-glycans; the final hydrolytic step in the N-glycan maturation pathway. This is Alpha-mannosidase 2 (MAN2A1) from Homo sapiens (Human).